A 92-amino-acid polypeptide reads, in one-letter code: Large ribosomal subunit protein eL43 (92 aa).

4 residues coordinate Zn(2+): cysteine 39, cysteine 42, cysteine 57, and cysteine 60. The C4-type zinc-finger motif lies at 39-60 (CSFCGKTKMKRRAVGIWHCGSC).

It belongs to the eukaryotic ribosomal protein eL43 family. In terms of assembly, component of the large ribosomal subunit.

Its subcellular location is the cytoplasm. In terms of biological role, component of the large ribosomal subunit. The ribosome is a large ribonucleoprotein complex responsible for the synthesis of proteins in the cell. This chain is Large ribosomal subunit protein eL43 (Rpl37a), found in Mus musculus (Mouse).